The sequence spans 147 residues: Zinc finger HIT domain-containing protein 3 (147 aa).

Zn(2+) contacts are provided by Cys-3, Cys-6, Cys-14, Cys-17, Cys-22, Cys-26, His-30, and Cys-34. The segment at 3-34 adopts an HIT-type zinc-finger fold; sequence CVICLEKPKYRCPACRVPYCSVACFRKHKEQC. A disordered region spans residues 45–67; it reads IRSALPTKTXKPVENKDDDDSIA. The residue at position 72 (Ser-72) is a Phosphoserine.

Thyroid receptor interacting proteins (TRIPs) specifically interact with the ligand binding domain of the thyroid receptor (TR). Requires the presence of thyroid hormone for its interaction. Interacts with NUFIP1. Interacts (via HIT-type zinc finger) with the RUVBL1/RUVBL2 complex in the presence of ADP.

The protein localises to the cytoplasm. The protein resides in the nucleus. In Macaca mulatta (Rhesus macaque), this protein is Zinc finger HIT domain-containing protein 3 (ZNHIT3).